A 932-amino-acid polypeptide reads, in one-letter code: Serine/threonine-protein kinase PknD (932 aa).

Positions 4–291 constitute a Protein kinase domain; it reads YDIVRIIGKG…ELKEDIESHL (288 aa). Residues 10–18 and lysine 33 each bind ATP; that span reads IGKGGMGEV. The active-site Proton acceptor is the aspartate 138.

The protein belongs to the protein kinase superfamily. Ser/Thr protein kinase family. In terms of processing, autophosphorylated on serine and threonine residues.

It carries out the reaction L-seryl-[protein] + ATP = O-phospho-L-seryl-[protein] + ADP + H(+). The enzyme catalyses L-threonyl-[protein] + ATP = O-phospho-L-threonyl-[protein] + ADP + H(+). Its function is as follows. Together with the serine/threonine kinase Pkn1, may play a role in the specific interactions with host proteins during intracellular growth. This chain is Serine/threonine-protein kinase PknD, found in Chlamydia pneumoniae (Chlamydophila pneumoniae).